Consider the following 1338-residue polypeptide: Terpene cyclase-glycosyl transferase fusion protein fsoA (1338 aa).

The segment at 1-687 (MDMAPDELDE…RFLDRTDEPD (687 aa)) is terpenne cyclase. PFTB repeat units lie at residues 19 to 61 (LEQA…PALN), 69 to 111 (AAAL…RLLG), and 267 to 307 (LRRC…SLEH). Aspartate 412 serves as the catalytic Proton donor. PFTB repeat units follow at residues 434–475 (VEMG…DSLV), 515–556 (AQKA…AFCG), and 564–615 (ALRA…LRFR). Positions 688-1338 (QDRDLPLLMT…NMLLGEGCQG (651 aa)) are glycosyltransferase.

This sequence in the N-terminal section; belongs to the terpene cyclase/mutase family. It in the C-terminal section; belongs to the glycosyltransferase 28 family.

The enzyme catalyses (S)-2,3-epoxysqualene = isomotiol. It catalyses the reaction isomotiol + UDP-alpha-D-glucose = 3-O-(beta-D-glucopyranosyl)-isomotiol + UDP + H(+). It carries out the reaction 2alpha-hydroxyisomotiol + UDP-alpha-D-glucose = 3-O-(beta-D-glucopyranosyl)-2alpha-hydroxyisomotiol + UDP + H(+). The protein operates within secondary metabolite biosynthesis; terpenoid biosynthesis. In terms of biological role, terpene cyclase-glycosyl transferase fusion protein; part of the gene cluster that mediates the biosynthesis of the enfumafungin-type antibiotic, fuscoatroside. Within the pathway, fsoA plays two important roles, the cyclization of 2,3(S)-oxidosqualene into isomotiol via its terpene cyclase (TC) domain and the C3 glycosylation of several intermediates via its glycosyltransferase (GT) domain. The fuscoatroside biosynthesis is initiated by the cyclization of 2,3(S)-oxidosqualene through FsoA's TC domain, leading to the formation of the fernane skeleton isomotiol, harboring a fernane triterpene skeleton with a C8-C9 double bond. Subsequently, C2-alpha-hydroxylation mediated by fsoD results in the production of 2-alpha-hydroxy-isomotiol, which is further acetylated by fsoF. The GT domain of FsoA may convert isomotiol, 2-alpha-hydroxy-isomotiol, and the acetylated derivative of 2-alpha-hydroxy-isomotiol into their corresponding glycosides 3-O-(beta-D-glucopyranosyl)-isomotiol, 3-O-(beta-D-glucopyranosyl)-2-alpha-hydroxy-isomotiol, and 3-O-(beta-D-glucopyranosyl)-2-alpha-acetoxy-isomotiol, which then undergo oxidative cleavage under the action of fsoE to form s 2-deacetoxy-fuscoatroside, 2-deacetyl-fuscoatroside, and fuscoatroside, respectively. Although hydroxylation followed by acetylation of 3-O-(beta-D-glucopyranosyl)-isomotiol and 2-deacetoxy-fuscoatroside by fsoD and fsoF could not be ruled out, this process is likely to occur with difficulty due to bulky steric hindrance caused by the presence of a glycan at C3 in these compounds. Interestingly, fsoE can also utilize the aglycones isomotiol and 2-alpha-hydroxy-isomotiol as substrates to generate 19-beta-hydroxy-isomotiol and 2-alpha,19-beta-dihydroxy-isomotiol, respectively. These reactions occur with lower efficiency. Finally, fsoE can further convert 2-alpha,19-beta-dihydroxy-isomotiol into 2-alpha-hydroxy-ismotiol-19-one and 2-alpha-hydroxy-ismotiol-19-one into 2-deacetyl-3-deglucopyranosyl-fuscoatroside. The polypeptide is Terpene cyclase-glycosyl transferase fusion protein fsoA (Humicola fuscoatra).